Here is a 358-residue protein sequence, read N- to C-terminus: 5,10-methenyltetrahydromethanopterin hydrogenase (358 aa).

The protein belongs to the HMD family. As to quaternary structure, homotetramer.

The catalysed reaction is 5,10-methenyl-5,6,7,8-tetrahydromethanopterin + H2 = 5,10-methylenetetrahydromethanopterin + H(+). It participates in one-carbon metabolism; methanogenesis from CO(2); 5,10-methylene-5,6,7,8-tetrahydromethanopterin from 5,10-methenyl-5,6,7,8-tetrahydromethanopterin (hydrogen route): step 1/1. Activity requires salt; 100 mM potassium phosphate, potassium chloride, and sodium chloride are equally effective. In terms of biological role, catalyzes the reversible reduction of methenyl-H(4)MPT(+) to methylene-H(4)MPT. In Methanopyrus kandleri (strain AV19 / DSM 6324 / JCM 9639 / NBRC 100938), this protein is 5,10-methenyltetrahydromethanopterin hydrogenase.